Reading from the N-terminus, the 360-residue chain is Protein RecA (360 aa).

An ATP-binding site is contributed by 69 to 76; sequence GPESSGKT.

It belongs to the RecA family.

It localises to the cytoplasm. In terms of biological role, can catalyze the hydrolysis of ATP in the presence of single-stranded DNA, the ATP-dependent uptake of single-stranded DNA by duplex DNA, and the ATP-dependent hybridization of homologous single-stranded DNAs. It interacts with LexA causing its activation and leading to its autocatalytic cleavage. This is Protein RecA from Trichodesmium erythraeum (strain IMS101).